The chain runs to 534 residues: NAD(P)H-quinone oxidoreductase subunit 2 (534 aa).

A run of 14 helical transmembrane segments spans residues isoleucine 15–leucine 35, tryptophan 42–tryptophan 62, leucine 79–isoleucine 99, leucine 109–alanine 129, leucine 132–tyrosine 152, leucine 167–leucine 187, leucine 210–alanine 230, proline 244–isoleucine 264, phenylalanine 280–glutamine 300, methionine 306–threonine 326, isoleucine 334–phenylalanine 354, leucine 378–glycine 398, glycine 410–valine 432, and valine 466–phenylalanine 486.

This sequence belongs to the complex I subunit 2 family. In terms of assembly, NDH-1 can be composed of about 15 different subunits; different subcomplexes with different compositions have been identified which probably have different functions.

It localises to the cellular thylakoid membrane. It catalyses the reaction a plastoquinone + NADH + (n+1) H(+)(in) = a plastoquinol + NAD(+) + n H(+)(out). It carries out the reaction a plastoquinone + NADPH + (n+1) H(+)(in) = a plastoquinol + NADP(+) + n H(+)(out). In terms of biological role, NDH-1 shuttles electrons from an unknown electron donor, via FMN and iron-sulfur (Fe-S) centers, to quinones in the respiratory and/or the photosynthetic chain. The immediate electron acceptor for the enzyme in this species is believed to be plastoquinone. Couples the redox reaction to proton translocation, and thus conserves the redox energy in a proton gradient. Cyanobacterial NDH-1 also plays a role in inorganic carbon-concentration. This chain is NAD(P)H-quinone oxidoreductase subunit 2, found in Nostoc punctiforme (strain ATCC 29133 / PCC 73102).